Consider the following 97-residue polypeptide: Putative CC-type chemokine U83 (97 aa).

2 disulfide bridges follow: C32/C62 and C33/C76.

This sequence belongs to the intercrine beta (chemokine CC) family. Highly divergent.

This is Putative CC-type chemokine U83 (U83) from Homo sapiens (Human).